The primary structure comprises 516 residues: Immunoglobulin G-binding protein A (516 aa).

An N-terminal signal peptide occupies residues 1–36 (MKKKNIYSIRKLGVGIASVTLGTLLISGGVTPAANA). The YSIRK-G/S signaling motif signature appears at 7–18 (YSIRKLGVGIAS). One copy of the Immunoglobulin-binding region E repeat lies at 37 to 92 (AQHDEAQQNAFYQVLNMPNLNADQRNGFIQSLKDDPSQSANVLGEAQKLNDSQAPK). The Immunoglobulin-binding region D repeat unit spans residues 93–153 (ADAQQNNFNK…KKLNESQAPK (61 aa)). An Immunoglobulin-binding region A repeat occupies 154–211 (ADNNFNKEQQNAFYEILNMPNLNEEQRNGFIQSLKDDPSQSANLLSEAKKLNESQAPK). The Immunoglobulin-binding region B repeat unit spans residues 212 to 269 (ADNKFNKEQQNAFYEILHLPNLNEEQRNGFIQSLKDDPSQSANLLAEAKKLNDAQAPK). The stretch at 270–327 (ADNKFNKEQQNAFYEILHLPNLTEEQRNGFIQSLKDDPSVSKEILAEAKKLNDAQAPK) is one Immunoglobulin-binding region C repeat. Positions 318–420 (KKLNDAQAPK…GNKPGKEDGN (103 aa)) are enriched in basic and acidic residues. 2 disordered regions span residues 318–440 (KKLN…ANGT) and 467–487 (KKQP…ETGE). 11 tandem repeats follow at residues 333 to 340 (KPGKEDNN), 341 to 348 (KPGKEDNN), 349 to 356 (KPGKEDNN), 357 to 364 (KPGKEDNN), 365 to 372 (KPGKEDGN), 373 to 380 (KPGKEDNK), 381 to 388 (KPGKEDGN), 389 to 396 (KPGKEDNK), 397 to 404 (KPGKEDGN), 405 to 412 (KPGKEDGN), and 413 to 420 (KPGKEDGN). The tract at residues 333-420 (KPGKEDNNKP…GNKPGKEDGN (88 aa)) is 11 X 8 AA approximate tandem repeats. In terms of domain architecture, LysM spans 421–465 (GVHVVKPGDTVNDIAKANGTTADKIAADNKLADKNMIKPGQELVV). Residues 482–486 (LPETG) carry the LPXTG sorting signal motif. Thr485 carries the pentaglycyl murein peptidoglycan amidated threonine modification. Residues 486 to 516 (GEENPFIGTTVFGGLSLALGAALLAGRRREL) constitute a propeptide, removed by sortase A.

This sequence belongs to the immunoglobulin-binding protein SpA family. Interacts with host TNFRSF1A; this interaction leads to the stimulation of both surface expression and shedding of TNFRSF1A.

It is found in the secreted. Its subcellular location is the cell wall. Plays a role in the inhibition of the host innate and adaptive immune responses. Possesses five immunoglobulin-binding domains that capture both the fragment crystallizable region (Fc region) and the Fab region (part of Ig that identifies antigen) of immunoglobulins. In turn, Staphylococcus aureus is protected from phagocytic killing via inhibition of Ig Fc region. In addition, the host elicited B-cell response is prevented due to a decrease of antibody-secreting cell proliferation that enter the bone marrow, thereby decreasing long-term antibody production. Inhibits osteogenesis by preventing osteoblast proliferation and expression of alkaline phosphatase, type I collagen, osteopontin and osteocalcin. Acts directly as a pro-inflammatory factor in the lung through its ability to bind and activate tumor necrosis factor alpha receptor 1/TNFRSF1A. This chain is Immunoglobulin G-binding protein A (spa), found in Staphylococcus aureus (strain NCTC 8325 / PS 47).